A 97-amino-acid chain; its full sequence is MSIKLTPLEDKIIVKQAEAQTQTASGLYIPDNAKEKPQQGEVLAVGPGRRDDKGERIPMDVKVGDKVLYSKYGGTEVHYEGEDYLIVGARDILAILG.

It belongs to the GroES chaperonin family. Heptamer of 7 subunits arranged in a ring. Interacts with the chaperonin GroEL.

Its subcellular location is the cytoplasm. Its function is as follows. Together with the chaperonin GroEL, plays an essential role in assisting protein folding. The GroEL-GroES system forms a nano-cage that allows encapsulation of the non-native substrate proteins and provides a physical environment optimized to promote and accelerate protein folding. GroES binds to the apical surface of the GroEL ring, thereby capping the opening of the GroEL channel. This is Co-chaperonin GroES from Bifidobacterium longum (strain NCC 2705).